A 138-amino-acid chain; its full sequence is Acidic phospholipase A2 BthA-1 (138 aa).

A signal peptide spans 1-16 (MRTLWIMAVLLVGVEG). Disulfide bonds link Cys-42-Cys-131, Cys-44-Cys-60, Cys-59-Cys-111, Cys-65-Cys-138, Cys-66-Cys-104, Cys-73-Cys-97, and Cys-91-Cys-102. Ca(2+)-binding residues include Tyr-43, Gly-47, and Gly-48. His-63 is a catalytic residue. A Ca(2+)-binding site is contributed by Asp-64. Asp-105 is a catalytic residue.

The protein belongs to the phospholipase A2 family. Group II subfamily. D49 sub-subfamily. In terms of assembly, homodimer; non-covalently linked. The cofactor is Ca(2+). Expressed by the venom gland.

The protein localises to the secreted. It catalyses the reaction a 1,2-diacyl-sn-glycero-3-phosphocholine + H2O = a 1-acyl-sn-glycero-3-phosphocholine + a fatty acid + H(+). Its activity is regulated as follows. Inhibited by EDTA and bromophenacyl bromide (BPB). In terms of biological role, snake venom phospholipase A2 (PLA2) that displays edema-inducing activities (activity that is inhibited by EDTA and dexamethasone), inhibits phospholipid-dependent collagen/ADP-induced platelet aggregation, possess hypotensive as well as anticoagulant activities. In addition, this enzyme shows bactericidal activity against E.coli and S.aureus. PLA2 catalyzes the calcium-dependent hydrolysis of the 2-acyl groups in 3-sn-phosphoglycerides. The protein is Acidic phospholipase A2 BthA-1 of Bothrops jararacussu (Jararacussu).